Here is a 468-residue protein sequence, read N- to C-terminus: UDP-N-acetylmuramate--L-alanine ligase (468 aa).

114-120 (GTHGKTT) contributes to the ATP binding site.

This sequence belongs to the MurCDEF family.

The protein resides in the cytoplasm. It carries out the reaction UDP-N-acetyl-alpha-D-muramate + L-alanine + ATP = UDP-N-acetyl-alpha-D-muramoyl-L-alanine + ADP + phosphate + H(+). It functions in the pathway cell wall biogenesis; peptidoglycan biosynthesis. Functionally, cell wall formation. This is UDP-N-acetylmuramate--L-alanine ligase from Rhodopseudomonas palustris (strain HaA2).